Reading from the N-terminus, the 223-residue chain is N-terminal Xaa-Pro-Lys N-methyltransferase 1 (223 aa).

An N-acetylmethionine modification is found at methionine 1. Threonine 2 is modified (N-acetylthreonine; in N-terminal Xaa-Pro-Lys N-methyltransferase 1, N-terminally processed). S-adenosyl-L-methionine contacts are provided by residues glycine 69, arginine 74, 91 to 93, 119 to 120, and glutamine 135; these read DVT and LQ.

Belongs to the methyltransferase superfamily. NTM1 family.

It localises to the nucleus. The enzyme catalyses N-terminal L-alanyl-L-prolyl-L-lysyl-[protein] + 3 S-adenosyl-L-methionine = N-terminal N,N,N-trimethyl-L-alanyl-L-prolyl-L-lysyl-[protein] + 3 S-adenosyl-L-homocysteine + 3 H(+). The catalysed reaction is N-terminal L-seryl-L-prolyl-L-lysyl-[protein] + 3 S-adenosyl-L-methionine = N-terminal N,N,N-trimethyl-L-seryl-L-prolyl-L-lysyl-[protein] + 3 S-adenosyl-L-homocysteine + 3 H(+). It carries out the reaction N-terminal L-prolyl-L-prolyl-L-lysyl-[protein] + 2 S-adenosyl-L-methionine = N-terminal N,N-dimethyl-L-prolyl-L-prolyl-L-lysyl-[protein] + 2 S-adenosyl-L-homocysteine + 2 H(+). Functionally, distributive alpha-N-methyltransferase that methylates the N-terminus of target proteins containing the N-terminal motif [Ala/Gly/Pro/Ser]-Pro-Lys when the initiator Met is cleaved. Specifically catalyzes mono-, di- or tri-methylation of the exposed alpha-amino group of the Ala, Gly or Ser residue in the [Ala/Gly/Ser]-Pro-Lys motif and mono- or di-methylation of Pro in the Pro-Pro-Lys motif. Some of the substrates may be primed by NTMT2-mediated monomethylation. Catalyzes the trimethylation of the N-terminal Gly in CENPA (after removal of Met-1). Responsible for the N-terminal methylation of KLHL31, MYL2, MYL3, RB1, RCC1, RPL23A and SET. Required during mitosis for normal bipolar spindle formation and chromosome segregation via its action on RCC1. This Rattus norvegicus (Rat) protein is N-terminal Xaa-Pro-Lys N-methyltransferase 1 (Ntmt1).